The sequence spans 635 residues: Threonine--tRNA ligase (635 aa).

The TGS domain occupies 1 to 61 (MIKITLKDGS…ENDCTLNLLT (61 aa)). The catalytic stretch occupies residues 242 to 532 (DHRKLGRELD…LTEHYAGAFP (291 aa)). The Zn(2+) site is built by Cys-333, His-384, and His-509.

It belongs to the class-II aminoacyl-tRNA synthetase family. As to quaternary structure, homodimer. Requires Zn(2+) as cofactor.

The protein resides in the cytoplasm. It carries out the reaction tRNA(Thr) + L-threonine + ATP = L-threonyl-tRNA(Thr) + AMP + diphosphate + H(+). Its function is as follows. Catalyzes the attachment of threonine to tRNA(Thr) in a two-step reaction: L-threonine is first activated by ATP to form Thr-AMP and then transferred to the acceptor end of tRNA(Thr). Also edits incorrectly charged L-seryl-tRNA(Thr). In Acetivibrio thermocellus (strain ATCC 27405 / DSM 1237 / JCM 9322 / NBRC 103400 / NCIMB 10682 / NRRL B-4536 / VPI 7372) (Clostridium thermocellum), this protein is Threonine--tRNA ligase.